A 436-amino-acid chain; its full sequence is MKFFQRPERRLKQWGLALLLAASALLPARADVVPLNHIVAVVNDEVITRQELAKRYDEVVRNLSRQNTPLPPRNVLEKQLLERMVTELALQQHARNTGVRADPTLVERALQRIAAQNKLDMAGLQAALEKEGQTLDGMRNTIRNELLIARARERDVDNRISVSDAEIDGYLQTQAQQGAETEYNFSHILVSVPENASPEQIRERRARAEDILAQLAAGADFAQLSASHSDAPDALKGGNFGWRASGKLPALFVEALKPMQPGEISPLLRSGNGFHILKLVDKRGLDATLSVTQTHARHILIKTNEITSEADARNRLLQLKERIDNGVKFDELARLHSEDASASKGGDLGWINPGDTVPDFEKAMNALQPGEVSAPVQSPFGWHLIQVLERRDQDVTQERQKLMARQAIRERKAEEAFQDWVRQIRDAAYVELRPID.

A signal peptide spans 1 to 30 (MKFFQRPERRLKQWGLALLLAASALLPARA). PpiC domains are found at residues 180–281 (ETEY…KLVD) and 291–389 (VTQT…QVLE).

The protein resides in the periplasm. It catalyses the reaction [protein]-peptidylproline (omega=180) = [protein]-peptidylproline (omega=0). Its function is as follows. Chaperone involved in the correct folding and assembly of outer membrane proteins. Recognizes specific patterns of aromatic residues and the orientation of their side chains, which are found more frequently in integral outer membrane proteins. May act in both early periplasmic and late outer membrane-associated steps of protein maturation. The sequence is that of Chaperone SurA from Thiobacillus denitrificans (strain ATCC 25259 / T1).